Reading from the N-terminus, the 438-residue chain is Enolase (438 aa).

His-159 and Glu-168 together coordinate substrate. Glu-211 serves as the catalytic Proton donor. Residues Asp-246, Glu-297, and Asp-322 each coordinate Mg(2+). Positions 297 and 322 each coordinate substrate. Lys-347 (proton acceptor) is an active-site residue. Substrate-binding positions include 374–377 and Lys-398; that span reads SHRS.

The protein belongs to the enolase family. In terms of assembly, homodimer. Requires Mg(2+) as cofactor.

The protein resides in the cytoplasm. It carries out the reaction (2R)-2-phosphoglycerate = phosphoenolpyruvate + H2O. Its pathway is carbohydrate degradation; glycolysis; pyruvate from D-glyceraldehyde 3-phosphate: step 4/5. The chain is Enolase (ENO) from Alternaria alternata (Alternaria rot fungus).